A 582-amino-acid chain; its full sequence is Type I secretion system ATP-binding protein PrsD (582 aa).

The next 3 helical transmembrane spans lie at 22-42 (FIGV…GSFF), 59-79 (LIAL…FELI), and 148-168 (IAIC…GGLI). The ABC transmembrane type-1 domain occupies 22-301 (FIGVGVASAL…AIGNWRGLVA (280 aa)). Residues 332–568 (LTVEGLASGP…VLRPQQVERQ (237 aa)) form the ABC transporter domain. 366–373 (GPSASGKS) provides a ligand contact to ATP.

It belongs to the ABC transporter superfamily. As to quaternary structure, part of a type I secretion system composed of PrsD and PrsE.

The protein resides in the cell inner membrane. Functionally, mediates secretion of glycanase ExsH. In Rhizobium meliloti (strain 1021) (Ensifer meliloti), this protein is Type I secretion system ATP-binding protein PrsD (prsD).